A 52-amino-acid chain; its full sequence is Light-harvesting protein B-870 alpha chain (52 aa).

Residues 1–15 (MAKFYKIWLIFDPRR) are Cytoplasmic-facing. Residues 16–36 (VFVAQGVFLFLLAAMIHLVVL) traverse the membrane as a helical segment. Residue H32 participates in a bacteriochlorophyll binding. Residues 37-52 (SSGLNWFEAAAAVGGQ) are Periplasmic-facing.

It belongs to the antenna complex alpha subunit family. The core complex is formed by different alpha and beta chains, binding bacteriochlorophyll molecules, and arranged most probably in tetrameric structures disposed around the reaction center. The non-pigmented gamma chains may constitute additional components.

Its subcellular location is the cell inner membrane. Functionally, antenna complexes are light-harvesting systems, which transfer the excitation energy to the reaction centers. The polypeptide is Light-harvesting protein B-870 alpha chain (pufA) (Roseobacter denitrificans (strain ATCC 33942 / OCh 114) (Erythrobacter sp. (strain OCh 114))).